A 945-amino-acid polypeptide reads, in one-letter code: Kinesin-like protein KIN-7F (945 aa).

Residues Arg-34 to Val-356 enclose the Kinesin motor domain. Gly-120–Thr-127 is a binding site for ATP. A coiled-coil region spans residues Val-365–Asn-437. 2 disordered regions span residues Arg-484–Ser-512 and Asn-553–Arg-588. Polar residues-rich tracts occupy residues Gln-495–Ser-512 and Ala-560–Ser-587.

Belongs to the TRAFAC class myosin-kinesin ATPase superfamily. Kinesin family. KIN-7 subfamily. In terms of assembly, binds microtubules.

Its function is as follows. Binds ATP/ADP in vitro. Possesses low ATPase activity but high affinity for microtubules. The polypeptide is Kinesin-like protein KIN-7F (Oryza sativa subsp. japonica (Rice)).